The primary structure comprises 222 residues: uncharacterized protein (222 aa).

Transmembrane regions (helical) follow at residues 23-43, 67-87, 157-177, and 187-207; these read FFAA…TGLL, IWVL…IGYL, IVGG…LGNV, and IILG…WHGY.

It belongs to the DedA family.

It localises to the cell membrane. This is an uncharacterized protein from Mycobacterium leprae (strain TN).